Here is a 642-residue protein sequence, read N- to C-terminus: MPVITLPDGSQRHYDHPVSPMDVALDIGPGLAKATIAGRVNGELVDASDLIENDATLAIITAKDEEGLEIIRHSCAHLLGHAIKQLWPHTKMAIGPVVDNGFYYDVDLDRTLTQEDVEALEKRMHELAEKNYDVIKKKVSWHDARETFVKRGETYKVAILDENIAHDDKPGLYHHEEYVDMCRGPHVPNMRFCHHFKLMKTAGAYWRGDSNNKMLQRIYGTAWADKKALNAYLQRLEEAAKRDHRKIGKQLDLYHMQEEAPGMVFWHNDGWTIFRELEVFVRSKLKEYQYQEVKGPFMMDRVLWEKTGHWDNYKDAMFTTSSENREYCIKPMNCPGHVQIFNQGLKSYRDLPLRMAEFGSCHRNEPSGALHGLMRVRGFTQDDAHIFCTEEQIRDEVNACIRMVYDMYSTFGFEKIVVKLSTRPDKRIGSDEMWDRAEADLAVALEENNIPFEYQLGEGAFYGPKIEFTLYDCLDRAWQCGTVQLDFSLPSRLSASYVGEDNERKVPVMIHRAILGSMERFIGILTEEFAGFFPTWLAPVQVVVMNITDSQSEYVNELTQKLQNAGIRVKADLRNEKIGFKIREHTLRRVPYMLVCGDKEVEAGKVAVRTRRGKDLGSLDVNDVIEKLQQEIRSRSLQQLEE.

In terms of domain architecture, TGS spans 1–61; that stretch reads MPVITLPDGS…ENDATLAIIT (61 aa). The tract at residues 243–534 is catalytic; that stretch reads DHRKIGKQLD…LTEEFAGFFP (292 aa). 3 residues coordinate Zn(2+): C334, H385, and H511.

This sequence belongs to the class-II aminoacyl-tRNA synthetase family. In terms of assembly, homodimer. The cofactor is Zn(2+).

Its subcellular location is the cytoplasm. The catalysed reaction is tRNA(Thr) + L-threonine + ATP = L-threonyl-tRNA(Thr) + AMP + diphosphate + H(+). Functionally, catalyzes the attachment of threonine to tRNA(Thr) in a two-step reaction: L-threonine is first activated by ATP to form Thr-AMP and then transferred to the acceptor end of tRNA(Thr). Also edits incorrectly charged L-seryl-tRNA(Thr). This chain is Threonine--tRNA ligase, found in Salmonella dublin (strain CT_02021853).